The chain runs to 86 residues: Small ribosomal subunit protein bS18 (86 aa).

Belongs to the bacterial ribosomal protein bS18 family. As to quaternary structure, part of the 30S ribosomal subunit. Forms a tight heterodimer with protein bS6.

Functionally, binds as a heterodimer with protein bS6 to the central domain of the 16S rRNA, where it helps stabilize the platform of the 30S subunit. The protein is Small ribosomal subunit protein bS18 of Protochlamydia amoebophila (strain UWE25).